A 572-amino-acid polypeptide reads, in one-letter code: 2-isopropylmalate synthase (572 aa).

The Pyruvate carboxyltransferase domain maps to 39–313 (PVWMSTDLRD…HPGLDFSRIN (275 aa)). The Mg(2+) site is built by D48, H252, H254, and N288. Positions 445 to 572 (VAAPYAYVEH…GVGRQVAATR (128 aa)) are regulatory domain.

Belongs to the alpha-IPM synthase/homocitrate synthase family. LeuA type 2 subfamily. As to quaternary structure, homodimer. It depends on Mg(2+) as a cofactor.

The protein resides in the cytoplasm. It catalyses the reaction 3-methyl-2-oxobutanoate + acetyl-CoA + H2O = (2S)-2-isopropylmalate + CoA + H(+). It functions in the pathway amino-acid biosynthesis; L-leucine biosynthesis; L-leucine from 3-methyl-2-oxobutanoate: step 1/4. In terms of biological role, catalyzes the condensation of the acetyl group of acetyl-CoA with 3-methyl-2-oxobutanoate (2-ketoisovalerate) to form 3-carboxy-3-hydroxy-4-methylpentanoate (2-isopropylmalate). The protein is 2-isopropylmalate synthase of Azoarcus sp. (strain BH72).